The primary structure comprises 299 residues: MKLLMLCREPRLYSCQRLKESAEDNGHQIDILDPNRCLLKLSKNAPHFELYYQVNSKSEPYLLPDYDAIIPRFGSTSTRMGCAVLRHFRTKNVFCLNDDVAFLKARDKWLSLQLLTEQGIAVPNSALSGAEFSATQAILQIQSPTILKTLHGSQGIGVILAENRKSAVSIMETLTQADVPLLMQDFIQEAQGTDIRCFVIGDKVVATMQRIGQEDEFRANFHRGGSAEKIQLTEQEKVLALKATKCLGLDVAGVDLIRSKQGLLVLEVNASPGLEMIEKTSGIDIALQMIVHIEKQFKR.

The ATP-grasp domain maps to 112–294 (LQLLTEQGIA…IALQMIVHIE (183 aa)). Residues Lys148, 185–186 (DF), Asp194, and 218–220 (RAN) contribute to the ATP site. Residues Asp255, Glu267, and Asn269 each contribute to the Mg(2+) site. Mn(2+) contacts are provided by Asp255, Glu267, and Asn269.

This sequence belongs to the RimK family. Requires Mg(2+) as cofactor. It depends on Mn(2+) as a cofactor.

In Histophilus somni (strain 2336) (Haemophilus somnus), this protein is Probable alpha-L-glutamate ligase.